The chain runs to 513 residues: Histidine ammonia-lyase (513 aa).

A cross-link (5-imidazolinone (Ala-Gly)) is located at residues 144–146; that stretch reads ASG. Ser145 carries the 2,3-didehydroalanine (Ser) modification.

The protein belongs to the PAL/histidase family. Post-translationally, contains an active site 4-methylidene-imidazol-5-one (MIO), which is formed autocatalytically by cyclization and dehydration of residues Ala-Ser-Gly.

It is found in the cytoplasm. It catalyses the reaction L-histidine = trans-urocanate + NH4(+). It functions in the pathway amino-acid degradation; L-histidine degradation into L-glutamate; N-formimidoyl-L-glutamate from L-histidine: step 1/3. The protein is Histidine ammonia-lyase of Streptococcus pyogenes serotype M18 (strain MGAS8232).